The sequence spans 335 residues: Fructose-1,6-bisphosphatase class 1 (335 aa).

Mg(2+)-binding residues include Glu92, Asp114, Leu116, and Asp117. Residues 117-120, Asn209, and Lys275 contribute to the substrate site; that span reads DGSS. Glu281 is a binding site for Mg(2+).

Belongs to the FBPase class 1 family. Homotetramer. It depends on Mg(2+) as a cofactor.

Its subcellular location is the cytoplasm. It carries out the reaction beta-D-fructose 1,6-bisphosphate + H2O = beta-D-fructose 6-phosphate + phosphate. It participates in carbohydrate biosynthesis; gluconeogenesis. The sequence is that of Fructose-1,6-bisphosphatase class 1 from Paracidovorax citrulli (strain AAC00-1) (Acidovorax citrulli).